A 365-amino-acid polypeptide reads, in one-letter code: Chorismate synthase (365 aa).

Residues Arg48 and Arg54 each contribute to the NADP(+) site. FMN contacts are provided by residues 125–127 (RSS), 237–238 (NA), Gly277, 292–296 (KPTSS), and Arg318.

It belongs to the chorismate synthase family. Homotetramer. The cofactor is FMNH2.

The catalysed reaction is 5-O-(1-carboxyvinyl)-3-phosphoshikimate = chorismate + phosphate. It functions in the pathway metabolic intermediate biosynthesis; chorismate biosynthesis; chorismate from D-erythrose 4-phosphate and phosphoenolpyruvate: step 7/7. Its function is as follows. Catalyzes the anti-1,4-elimination of the C-3 phosphate and the C-6 proR hydrogen from 5-enolpyruvylshikimate-3-phosphate (EPSP) to yield chorismate, which is the branch point compound that serves as the starting substrate for the three terminal pathways of aromatic amino acid biosynthesis. This reaction introduces a second double bond into the aromatic ring system. The protein is Chorismate synthase of Paracidovorax citrulli (strain AAC00-1) (Acidovorax citrulli).